Reading from the N-terminus, the 156-residue chain is Small ribosomal subunit protein uS7 (156 aa).

The protein belongs to the universal ribosomal protein uS7 family. As to quaternary structure, part of the 30S ribosomal subunit. Contacts proteins S9 and S11.

Functionally, one of the primary rRNA binding proteins, it binds directly to 16S rRNA where it nucleates assembly of the head domain of the 30S subunit. Is located at the subunit interface close to the decoding center, probably blocks exit of the E-site tRNA. This chain is Small ribosomal subunit protein uS7, found in Burkholderia multivorans (strain ATCC 17616 / 249).